Reading from the N-terminus, the 441-residue chain is MAADPLPPSAMVQPGTLNLNNEVVKMRKEVKRIRVLVIRKLVRSVGRLKSKKGTEDALLKNQRRAQRLLEEIHAMKELKPDVVTKSALSDDINFEKTCKKPDSTATDRAVARLAGHPLLKKKIDVLKDAVQAFKDARQSAPAAESSESTSGEGRCKDIARSKDDARESQHPERTVVREQKAKDTNTAAKNAASGSKEKLAKTEQAPRAGTTPGSQGRPSGKGAGVNSEHQGAPAPGDSNQGKASTKTPEDSVCEPANNGVSEEEESEGEKEYFDDSTEERFYKQSSASEDSDSGDDFFIGKVRRTRKKESGVHSSAKELKPLPKVPSKTSTLETPWDVRNDKHRPIPEARKFESVFFHSLAGPKSSRRDPREQAPKNKAPDFPENEPPVKKQFTKSAYRGFESVKQTMQAPLHPSWEASRRRKEQQSKIAVFQGKKITFDD.

Coiled coils occupy residues Lys52–Glu77 and Leu118–Ala140. Disordered stretches follow at residues Arg137–Lys342, Phe357–Val389, and Gln406–Asp441. A compositionally biased stretch (low complexity) spans Ser139 to Glu152. A compositionally biased stretch (basic and acidic residues) spans Gly153–Asp183. Lys201 participates in a covalent cross-link: Glycyl lysine isopeptide (Lys-Gly) (interchain with G-Cter in SUMO2). A Phosphoserine modification is found at Ser214. Polar residues predominate over residues Asp237–Lys246. Positions Glu269–Tyr282 are enriched in basic and acidic residues. Residues Ser276, Ser291, and Ser293 each carry the phosphoserine modification. The segment covering Lys308 to Pro321 has biased composition (basic and acidic residues). A Glycyl lysine isopeptide (Lys-Gly) (interchain with G-Cter in SUMO2) cross-link involves residue Lys328. Over residues Ser366–Asp381 the composition is skewed to basic and acidic residues.

In terms of assembly, interacts with SRF. Forms complexes with SRF and SRF cofactors ARID2, MYOCD and NKX2-5. Interacts with the N-terminus of SLC2A4. In terms of tissue distribution, highly expressed in heart, skeletal muscle, liver, kidney, testis and brain. Also expressed in white adipose tissue. Expression is up-regulated in cardiomyopathic heart.

Its subcellular location is the cytoplasm. The protein localises to the perinuclear region. In terms of biological role, may be involved in regulating transcriptional activation of cardiac genes during the aging process. May play a role in biosynthesis and/or processing of SLC2A4 in adipose cells. In Mus musculus (Mouse), this protein is Serum response factor-binding protein 1.